The following is a 149-amino-acid chain: Macrodomain Ter protein (149 aa).

This sequence belongs to the MatP family. As to quaternary structure, homodimer.

It is found in the cytoplasm. In terms of biological role, required for spatial organization of the terminus region of the chromosome (Ter macrodomain) during the cell cycle. Prevents early segregation of duplicated Ter macrodomains during cell division. Binds specifically to matS, which is a 13 bp signature motif repeated within the Ter macrodomain. The chain is Macrodomain Ter protein from Vibrio cholerae serotype O1 (strain ATCC 39315 / El Tor Inaba N16961).